The sequence spans 211 residues: Uridine kinase (211 aa).

An ATP-binding site is contributed by 12–19; the sequence is GGTGSGKT.

The protein belongs to the uridine kinase family.

It localises to the cytoplasm. The catalysed reaction is uridine + ATP = UMP + ADP + H(+). It carries out the reaction cytidine + ATP = CMP + ADP + H(+). The protein operates within pyrimidine metabolism; CTP biosynthesis via salvage pathway; CTP from cytidine: step 1/3. It participates in pyrimidine metabolism; UMP biosynthesis via salvage pathway; UMP from uridine: step 1/1. This is Uridine kinase from Halalkalibacterium halodurans (strain ATCC BAA-125 / DSM 18197 / FERM 7344 / JCM 9153 / C-125) (Bacillus halodurans).